The chain runs to 535 residues: Ribonuclease Y (535 aa).

Residues 4–24 traverse the membrane as a helical segment; the sequence is IILLIVSALIGLILGYALISI. The disordered stretch occupies residues 118-141; that stretch reads ENLSSKEKVLDSKEQSLTDKSKHI. The KH domain occupies 225–285; that stretch reads TITSVHLPDD…IRREIARMTL (61 aa). Residues 351–444 form the HD domain; it reads VLRHSVEVGK…VAAADALSSA (94 aa).

It belongs to the RNase Y family.

Its subcellular location is the cell membrane. Functionally, endoribonuclease that initiates mRNA decay. The sequence is that of Ribonuclease Y from Streptococcus pyogenes serotype M2 (strain MGAS10270).